The primary structure comprises 712 residues: Polyribonucleotide nucleotidyltransferase (712 aa).

Residues Asp487 and Asp493 each contribute to the Mg(2+) site. The KH domain occupies 554–613 (PKILTMQINPEKIREVIGPSGKQINKIIDETGVKIDIEQDGTIFISSVNEAMNQKAKQII). The S1 motif domain maps to 623–691 (GQIYLGKVKR…KQGRVNLSRK (69 aa)).

It belongs to the polyribonucleotide nucleotidyltransferase family. Mg(2+) serves as cofactor.

The protein localises to the cytoplasm. The enzyme catalyses RNA(n+1) + phosphate = RNA(n) + a ribonucleoside 5'-diphosphate. Involved in mRNA degradation. Catalyzes the phosphorolysis of single-stranded polyribonucleotides processively in the 3'- to 5'-direction. The polypeptide is Polyribonucleotide nucleotidyltransferase (Geobacillus sp. (strain WCH70)).